Consider the following 116-residue polypeptide: Aspartate 1-decarboxylase (116 aa).

Serine 25 serves as the catalytic Schiff-base intermediate with substrate; via pyruvic acid. Residue serine 25 is modified to Pyruvic acid (Ser). Residue threonine 57 coordinates substrate. The Proton donor role is filled by tyrosine 58. Substrate is bound at residue 73–75 (GAA).

The protein belongs to the PanD family. In terms of assembly, heterooctamer of four alpha and four beta subunits. The cofactor is pyruvate. In terms of processing, is synthesized initially as an inactive proenzyme, which is activated by self-cleavage at a specific serine bond to produce a beta-subunit with a hydroxyl group at its C-terminus and an alpha-subunit with a pyruvoyl group at its N-terminus.

It localises to the cytoplasm. The catalysed reaction is L-aspartate + H(+) = beta-alanine + CO2. It participates in cofactor biosynthesis; (R)-pantothenate biosynthesis; beta-alanine from L-aspartate: step 1/1. Its function is as follows. Catalyzes the pyruvoyl-dependent decarboxylation of aspartate to produce beta-alanine. This Leptospira interrogans serogroup Icterohaemorrhagiae serovar Lai (strain 56601) protein is Aspartate 1-decarboxylase.